A 275-amino-acid polypeptide reads, in one-letter code: Dermonecrotic toxin SpeSicTox-betaIIA2ii (275 aa).

The active site involves His5. Positions 25 and 27 each coordinate Mg(2+). His41 serves as the catalytic Nucleophile. Cystine bridges form between Cys45–Cys51 and Cys47–Cys190. A Mg(2+)-binding site is contributed by Asp85.

Belongs to the arthropod phospholipase D family. Class II subfamily. Mg(2+) is required as a cofactor. Expressed by the venom gland.

It is found in the secreted. The enzyme catalyses an N-(acyl)-sphingosylphosphocholine = an N-(acyl)-sphingosyl-1,3-cyclic phosphate + choline. The catalysed reaction is an N-(acyl)-sphingosylphosphoethanolamine = an N-(acyl)-sphingosyl-1,3-cyclic phosphate + ethanolamine. It catalyses the reaction a 1-acyl-sn-glycero-3-phosphocholine = a 1-acyl-sn-glycero-2,3-cyclic phosphate + choline. It carries out the reaction a 1-acyl-sn-glycero-3-phosphoethanolamine = a 1-acyl-sn-glycero-2,3-cyclic phosphate + ethanolamine. Its function is as follows. Dermonecrotic toxins cleave the phosphodiester linkage between the phosphate and headgroup of certain phospholipids (sphingolipid and lysolipid substrates), forming an alcohol (often choline) and a cyclic phosphate. This toxin acts on sphingomyelin (SM). It may also act on ceramide phosphoethanolamine (CPE), lysophosphatidylcholine (LPC) and lysophosphatidylethanolamine (LPE), but not on lysophosphatidylserine (LPS), and lysophosphatidylglycerol (LPG). It acts by transphosphatidylation, releasing exclusively cyclic phosphate products as second products. Induces dermonecrosis, hemolysis, increased vascular permeability, edema, inflammatory response, and platelet aggregation. This is Dermonecrotic toxin SpeSicTox-betaIIA2ii from Sicarius peruensis (Six-eyed sand spider).